The chain runs to 239 residues: MPPDERAPLPLPAPAPLTPPEGFAERLAAIGVTLDAAVIAKLGDYLARLLAMNELMNLTSITDPVEVWEKHVLDSLTLLPLLEELSAGARLADIGSGGGLPGLPLAIARPDLKVTLVEATQKKASFLVAVAAGLGLTNVSVRAERAEQLGKGDLCGAFDAVTARAVGRLVMLIPLTVPFVRPSGLVLLVKGQRAEEELAEASWVLGRQRAAFVKTVATPTGKIVMLRKSGEEPKRHPGR.

Residues Gly95, Leu100, 118–120, 146–147, and Arg164 contribute to the S-adenosyl-L-methionine site; these read EAT and AE.

This sequence belongs to the methyltransferase superfamily. RNA methyltransferase RsmG family.

The protein localises to the cytoplasm. The catalysed reaction is guanosine(527) in 16S rRNA + S-adenosyl-L-methionine = N(7)-methylguanosine(527) in 16S rRNA + S-adenosyl-L-homocysteine. Functionally, specifically methylates the N7 position of guanine in position 527 of 16S rRNA. The sequence is that of Ribosomal RNA small subunit methyltransferase G from Sorangium cellulosum (strain So ce56) (Polyangium cellulosum (strain So ce56)).